The following is a 564-amino-acid chain: NAD-dependent malic enzyme (564 aa).

Tyr102 (proton donor) is an active-site residue. Arg155 is a binding site for NAD(+). Lys173 serves as the catalytic Proton acceptor. Positions 244, 245, and 268 each coordinate a divalent metal cation. Asp268 and Asn417 together coordinate NAD(+).

It belongs to the malic enzymes family. In terms of assembly, homotetramer. Mg(2+) serves as cofactor. It depends on Mn(2+) as a cofactor.

It carries out the reaction (S)-malate + NAD(+) = pyruvate + CO2 + NADH. The catalysed reaction is oxaloacetate + H(+) = pyruvate + CO2. In Pseudomonas aeruginosa (strain UCBPP-PA14), this protein is NAD-dependent malic enzyme.